The sequence spans 110 residues: Acylphosphatase (110 aa).

The Acylphosphatase-like domain occupies 24–110; it reads RVRVYVSGRV…SGGARGFEVR (87 aa). Residues arginine 39 and asparagine 57 contribute to the active site.

Belongs to the acylphosphatase family.

The catalysed reaction is an acyl phosphate + H2O = a carboxylate + phosphate + H(+). The chain is Acylphosphatase (acyP) from Rubrobacter xylanophilus (strain DSM 9941 / JCM 11954 / NBRC 16129 / PRD-1).